Here is a 40-residue protein sequence, read N- to C-terminus: Submaxillary gland androgen-regulated protein 2, isoform epsilon (40 aa).

The N-terminal stretch at 1–20 (MKALYMVFVLWVLIGCFLRC) is a signal peptide.

The protein resides in the secreted. Its function is as follows. May play a role in protection or detoxification. This is Submaxillary gland androgen-regulated protein 2, isoform epsilon (Smr2) from Mus musculus (Mouse).